The chain runs to 305 residues: Mitochondrial uncoupling protein 3 (305 aa).

Solcar repeat units lie at residues 14-100 (TRIL…LKGL), 112-204 (LPLA…AKHF), and 213-299 (DNIF…FRLL). The next 6 membrane-spanning stretches (helical) occupy residues 16–36 (ILLASLSAMVAESVTFPIDLT), 69–89 (VIGLYKGLSPAIIRHLFYTPI), 118–138 (ALVGGFSGVIAQVVASPADLV), 178–198 (KGVLPNIQRAFLVNMGELACY), 219–239 (TLASIMSGLASTSLSCPADVV), and 272–292 (WKGFFPTWARLGPWQFVFWVS).

It belongs to the mitochondrial carrier (TC 2.A.29) family.

It localises to the mitochondrion inner membrane. Its function is as follows. PUMPS are mitochondrial transporter proteins that create proton leaks across the inner mitochondrial membrane, thus uncoupling oxidative phosphorylation. This leads to a decrease in the efficiency of oxidative phosphorylation and an increase in heat production. May be involved in protecting plant cells against oxidative stress damage. The chain is Mitochondrial uncoupling protein 3 (PUMP3) from Arabidopsis thaliana (Mouse-ear cress).